The chain runs to 115 residues: MKFVLLFGVLLVTLFSYSSAEMLDDFDQADEDELLSLIEKEEARAKECTPRFYDCSHDRHSCCRSELFKDVCTCFYPEGGDNEVCTCQQPKHLKYMEKAAGKAKKFGGKIRKWFG.

Positions 1–20 are cleaved as a signal peptide; the sequence is MKFVLLFGVLLVTLFSYSSA. Positions 21-44 are excised as a propeptide; it reads EMLDDFDQADEDELLSLIEKEEAR. Cystine bridges form between Cys-48/Cys-63, Cys-55/Cys-72, Cys-62/Cys-87, and Cys-74/Cys-85.

Belongs to the neurotoxin 19 (CSTX) family. 01 subfamily. In terms of tissue distribution, expressed by the venom gland.

It localises to the secreted. The sequence is that of U3-lycotoxin-Ls1o from Lycosa singoriensis (Wolf spider).